A 316-amino-acid chain; its full sequence is MATIEACDFFPYTVLSRSQWKSLRKASSLPINEQELEQLVGLNEPITLNEVADIYVPLAELLHVHATAYQRLQQQKRGFFHHGKNRSPFIIGLAGSVAVGKSTTARLLQKLLKAWPEHHHVDLVTTDGFLYPNETLEARGLMDKKGFPESYDLPALIRFLSDVKAGEPYVKAPVYSHLTYNIVEGDYQVVHEPDIVIVEGINVLQVNKRNHHIPNVFVSDFFDFSIYVDAKEEQILQWYIERFKLLQNTAFQDPNSYFHRFRHLSEVEAEQFATSIWKNINGVNLHENILPTKHRADLVLQKGPHHFIDEVKLRNI.

95 to 102 provides a ligand contact to ATP; the sequence is GSVAVGKS.

The protein belongs to the prokaryotic pantothenate kinase family.

The protein resides in the cytoplasm. It catalyses the reaction (R)-pantothenate + ATP = (R)-4'-phosphopantothenate + ADP + H(+). It participates in cofactor biosynthesis; coenzyme A biosynthesis; CoA from (R)-pantothenate: step 1/5. This is Pantothenate kinase (coaA) from Halalkalibacterium halodurans (strain ATCC BAA-125 / DSM 18197 / FERM 7344 / JCM 9153 / C-125) (Bacillus halodurans).